Here is a 352-residue protein sequence, read N- to C-terminus: MMFHDLSERERQVLSIIIQAYVMNASPVGSRYIARNYNLGLSDATIRNVMADLEDAGYISQPHTSAGRVPTDKGYRYYVDLIMRVQGIDDEEINRIDRNFRLLKYDPKDSADILQAAAKVLGSISQQLSVVISPRLSNALFERLDLVVLSSSRIMVVLSIQSLFVRTIVMELSLEVSRQQIDNVIDLLNQRLSGLTLREIRNSISRRLADCDKDRELLNMIVGSADNLFDDTPVLERLYIAGAEHIVNQPEFDQPQKVRDLVCMIEDKNRMVELLEKEGRVKPVTSSGMDVSISIGRENSATTAEDFTVVTTPYYVGNTIGRLGVLGPKRMDYERVVRLVNYMADRLSHSLS.

It belongs to the HrcA family.

Negative regulator of class I heat shock genes (grpE-dnaK-dnaJ and groELS operons). Prevents heat-shock induction of these operons. This is Heat-inducible transcription repressor HrcA from Chlorobium phaeobacteroides (strain BS1).